The sequence spans 259 residues: Undecaprenyl-diphosphatase 4 (259 aa).

The next 8 membrane-spanning stretches (helical) occupy residues 1 to 21 (MNWL…FLPI), 39 to 59 (AGLF…FIYY), 71 to 91 (FSKL…IGLL), 99 to 119 (ISKT…FLYM), 133 to 153 (ITYK…FPAI), 174 to 194 (AYFS…LQFV), 208 to 228 (SLIV…SWMI), and 239 to 259 (FAYY…TDVF).

It belongs to the UppP family.

It localises to the cell membrane. The enzyme catalyses di-trans,octa-cis-undecaprenyl diphosphate + H2O = di-trans,octa-cis-undecaprenyl phosphate + phosphate + H(+). Catalyzes the dephosphorylation of undecaprenyl diphosphate (UPP). Confers resistance to bacitracin. The chain is Undecaprenyl-diphosphatase 4 from Bacillus cereus (strain ZK / E33L).